The primary structure comprises 536 residues: T-complex protein 1 subunit delta (536 aa).

The span at 1-15 shows a compositional bias: polar residues; sequence MPEGKATSSASNTGK. The disordered stretch occupies residues 1–26; sequence MPEGKATSSASNTGKNKGGAYQDRDK. Gly-50 contributes to the ADP binding site. Residue Gly-50 coordinates ATP. Asp-101 serves as a coordination point for Mg(2+). ADP contacts are provided by Gly-102, Thr-103, Thr-104, Ser-105, Ser-170, Lys-171, Gly-422, and Gln-507. ATP is bound by residues Gly-102 and Thr-103. Lys-171 is an ATP binding site.

The protein belongs to the TCP-1 chaperonin family. In terms of assembly, component of the chaperonin-containing T-complex (TRiC), a hexadecamer composed of two identical back-to-back stacked rings enclosing a protein folding chamber. Each ring is made up of eight different subunits: TCP1/CCT1, CCT2, CCT3, CCT4, CCT5, CCT6A/CCT6, CCT7, CCT8.

Its subcellular location is the cytoplasm. The enzyme catalyses ATP + H2O = ADP + phosphate + H(+). In terms of biological role, component of the chaperonin-containing T-complex (TRiC), a molecular chaperone complex that assists the folding of actin, tubulin and other proteins upon ATP hydrolysis. The chain is T-complex protein 1 subunit delta (cct4) from Takifugu rubripes (Japanese pufferfish).